The sequence spans 908 residues: Bifunctional uridylyltransferase/uridylyl-removing enzyme (908 aa).

Positions 1 to 360 (MFDTPAVFAR…LERIFRRRRR (360 aa)) are uridylyltransferase. The uridylyl-removing stretch occupies residues 361-718 (IKQGYKVVRG…LDPDEDRDAT (358 aa)). Positions 477 to 599 (VDEHTIQTIV…VQTTKRLDLL (123 aa)) constitute an HD domain. 2 ACT domains span residues 719–801 (RACF…LKSR) and 829–904 (IIEV…GAER).

The protein belongs to the GlnD family. Mg(2+) is required as a cofactor.

The catalysed reaction is [protein-PII]-L-tyrosine + UTP = [protein-PII]-uridylyl-L-tyrosine + diphosphate. It carries out the reaction [protein-PII]-uridylyl-L-tyrosine + H2O = [protein-PII]-L-tyrosine + UMP + H(+). With respect to regulation, uridylyltransferase (UTase) activity is inhibited by glutamine, while glutamine activates uridylyl-removing (UR) activity. Functionally, modifies, by uridylylation and deuridylylation, the PII regulatory proteins (GlnB and homologs), in response to the nitrogen status of the cell that GlnD senses through the glutamine level. Under low glutamine levels, catalyzes the conversion of the PII proteins and UTP to PII-UMP and PPi, while under higher glutamine levels, GlnD hydrolyzes PII-UMP to PII and UMP (deuridylylation). Thus, controls uridylylation state and activity of the PII proteins, and plays an important role in the regulation of nitrogen assimilation and metabolism. This chain is Bifunctional uridylyltransferase/uridylyl-removing enzyme, found in Ruegeria pomeroyi (strain ATCC 700808 / DSM 15171 / DSS-3) (Silicibacter pomeroyi).